The primary structure comprises 395 residues: MERIAVLAYSGGLDTSCCLKLLEDKYGYKVVSVCVDVGQPEEEIKEVEEKAKKLGVLKHYTIDAKEEFVKDYIFRAIKANAMYEGYPLSTALARPLIAHKVVEIAEEVGAEAVAHGCTGKGNDQFRFETTIRIKAPHLKIIAPIRDLNLTRAEEIEYAKEKGIPIPTESKKYSIDENLWGRSIEGSELENPDFVPPEEIYAWTKNPVEDKEEEIVEIEFKEGVPVAINGEKLEPVELIKKANEIAGKHGVGRIDIIEDRIIGLKSRENYECPGAVLLLTAHKALEQLVLTRDELRFKEIVDSLYGELIYKGLWFDPLREDLDAFIDKTQERVTGTVKVKLFGGTARVVGRDSPYALYSKELVSFDEKEIDQKELAGMVKYHGLQAMLYEMRKKRK.

Residue 8 to 16 (AYSGGLDTS) participates in ATP binding. Y86 is an L-citrulline binding site. G116 is a binding site for ATP. Residues T118, N122, and D123 each contribute to the L-aspartate site. An L-citrulline-binding site is contributed by N122. Positions 126, 173, 182, 257, and 269 each coordinate L-citrulline.

The protein belongs to the argininosuccinate synthase family. Type 1 subfamily. Homotetramer.

Its subcellular location is the cytoplasm. The enzyme catalyses L-citrulline + L-aspartate + ATP = 2-(N(omega)-L-arginino)succinate + AMP + diphosphate + H(+). The protein operates within amino-acid biosynthesis; L-arginine biosynthesis; L-arginine from L-ornithine and carbamoyl phosphate: step 2/3. The polypeptide is Argininosuccinate synthase (Methanocaldococcus jannaschii (strain ATCC 43067 / DSM 2661 / JAL-1 / JCM 10045 / NBRC 100440) (Methanococcus jannaschii)).